The chain runs to 265 residues: Small ribosomal subunit protein eS4 (265 aa).

The S4 RNA-binding domain maps to 42–104 (LPLILIIRNR…TGENYRLLYD (63 aa)).

This sequence belongs to the eukaryotic ribosomal protein eS4 family.

The protein localises to the cytoplasm. This chain is Small ribosomal subunit protein eS4 (RPS4), found in Oryza sativa subsp. japonica (Rice).